We begin with the raw amino-acid sequence, 132 residues long: Large ribosomal subunit protein bL12 (132 aa).

Belongs to the bacterial ribosomal protein bL12 family. In terms of assembly, homodimer. Part of the ribosomal stalk of the 50S ribosomal subunit. Forms a multimeric L10(L12)X complex, where L10 forms an elongated spine to which 2 to 4 L12 dimers bind in a sequential fashion. Binds GTP-bound translation factors.

Forms part of the ribosomal stalk which helps the ribosome interact with GTP-bound translation factors. Is thus essential for accurate translation. In Chloroflexus aurantiacus (strain ATCC 29366 / DSM 635 / J-10-fl), this protein is Large ribosomal subunit protein bL12.